The chain runs to 462 residues: 7-hydroxymethyl chlorophyll a reductase, chloroplastic (462 aa).

The transit peptide at 1–20 (MITVVTSRLSLLPPVFSVVN) directs the protein to the chloroplast.

The protein belongs to the FrhB family. Interacts with SGR1, the chlorophyll catabolic enzymes (CCEs) NYC1, NOL and RCCR, and the LHCII complex. Part of a SGR1-CCE-LHCII complex, which acts in chlorophyll breakdown. FAD serves as cofactor. Requires iron-sulfur cluster as cofactor.

Its subcellular location is the plastid. It is found in the chloroplast. The enzyme catalyses chlorophyll a + 2 oxidized [2Fe-2S]-[ferredoxin] + H2O = 7(1)-hydroxychlorophyll a + 2 reduced [2Fe-2S]-[ferredoxin] + 2 H(+). Its function is as follows. Probable iron-sulfur flavoprotein that converts 7-hydroxymethyl chlorophyll a to chlorophyll a using ferredoxin as a reducing equivalent. Catalyzes the reduction of a hydroxymethyl group to a methyl group. Belongs to the chlorophyll catabolic enzymes (CCEs). The chain is 7-hydroxymethyl chlorophyll a reductase, chloroplastic (HCAR) from Arabidopsis thaliana (Mouse-ear cress).